The following is a 51-amino-acid chain: Basic phospholipase A2 homolog BmatTX-I (51 aa).

A disulfide bond links C28 and C44.

As to quaternary structure, monomer. As to expression, expressed by the venom gland.

It localises to the secreted. Snake venom phospholipase A2 homolog that lacks enzymatic activity. Shows high myotoxic activity, neutrophile activation (demonstrated by activation induction of IL-1beta production), slight cytotoxicity against Jurkat (leukemia T) and SK-BR-3 (breast adenocarcinoma) tumor cell lines, and slight antiparasitic activity against promastigote forms of Leishmania amazonensis. A model of myotoxic mechanism has been proposed: an apo Lys49-PLA2 is activated by the entrance of a hydrophobic molecule (e.g. fatty acid) at the hydrophobic channel of the protein leading to a reorientation of a monomer. This reorientation causes a transition between 'inactive' to 'active' states, causing alignment of C-terminal and membrane-docking sites (MDoS) side-by-side and putting the membrane-disruption sites (MDiS) in the same plane, exposed to solvent and in a symmetric position for both monomers. The MDoS region stabilizes the toxin on membrane by the interaction of charged residues with phospholipid head groups. Subsequently, the MDiS region destabilizes the membrane with penetration of hydrophobic residues. This insertion causes a disorganization of the membrane, allowing an uncontrolled influx of ions (i.e. calcium and sodium), and eventually triggering irreversible intracellular alterations and cell death. The protein is Basic phospholipase A2 homolog BmatTX-I of Bothrops mattogrossensis (Pitviper).